We begin with the raw amino-acid sequence, 348 residues long: Heat-inducible transcription repressor HrcA (348 aa).

It belongs to the HrcA family.

Negative regulator of class I heat shock genes (grpE-dnaK-dnaJ and groELS operons). Prevents heat-shock induction of these operons. This is Heat-inducible transcription repressor HrcA from Chlorobium chlorochromatii (strain CaD3).